A 376-amino-acid polypeptide reads, in one-letter code: Chaperone protein DnaJ 2 (376 aa).

The J domain maps to 8 to 72 (DYYEILGVPR…EKRKLYDMYG (65 aa)). The CR-type zinc-finger motif lies at 143–219 (GTTVPIEVER…CTGRGYGLVK (77 aa)). 8 residues coordinate Zn(2+): Cys156, Cys159, Cys172, Cys175, Cys194, Cys197, Cys207, and Cys210. CXXCXGXG motif repeat units follow at residues 156–163 (CSACGGTG), 172–179 (CPTCGGRG), 194–201 (CPTCGGEG), and 207–214 (CHACTGRG).

This sequence belongs to the DnaJ family. In terms of assembly, homodimer. Zn(2+) is required as a cofactor.

The protein resides in the cytoplasm. Participates actively in the response to hyperosmotic and heat shock by preventing the aggregation of stress-denatured proteins and by disaggregating proteins, also in an autonomous, DnaK-independent fashion. Unfolded proteins bind initially to DnaJ; upon interaction with the DnaJ-bound protein, DnaK hydrolyzes its bound ATP, resulting in the formation of a stable complex. GrpE releases ADP from DnaK; ATP binding to DnaK triggers the release of the substrate protein, thus completing the reaction cycle. Several rounds of ATP-dependent interactions between DnaJ, DnaK and GrpE are required for fully efficient folding. Also involved, together with DnaK and GrpE, in the DNA replication of plasmids through activation of initiation proteins. This chain is Chaperone protein DnaJ 2, found in Aquifex aeolicus (strain VF5).